Consider the following 196-residue polypeptide: Adenosylcobinamide-phosphate guanylyltransferase (196 aa).

In terms of assembly, homodimer.

The catalysed reaction is adenosylcob(III)inamide phosphate + GTP + H(+) = adenosylcob(III)inamide-GDP + diphosphate. It functions in the pathway cofactor biosynthesis; adenosylcobalamin biosynthesis. In terms of biological role, guanylyltransferase that catalyzes the synthesis of adenosylcobinamide-GDP (AdoCbi-GDP) from adenosylcobinamide-phosphate (AdoCbi-P) and GTP. Is involved in adenosylcobalamin biosynthesis. Binds one GTP per dimer. Cannot use other NTPs or GDP. Does not display AdoCbi kinase activity. Is also able to catalyze the condensation of 2-phospho-L-lactate (LP) with GTP in vitro to form PPi and (2S)-lactyl-2-diphospho-5'-guanosine (LPPG), but is much less efficient than CofC, the presumed enzyme catalyzing this reaction in vivo. This chain is Adenosylcobinamide-phosphate guanylyltransferase (cobY), found in Methanocaldococcus jannaschii (strain ATCC 43067 / DSM 2661 / JAL-1 / JCM 10045 / NBRC 100440) (Methanococcus jannaschii).